A 332-amino-acid chain; its full sequence is 2,3-diketo-L-gulonate reductase (332 aa).

His44 acts as the Proton donor in catalysis. NAD(+) contacts are provided by residues 168 to 174 (ITMVDMS), 224 to 225 (WK), and 304 to 306 (GHE).

This sequence belongs to the LDH2/MDH2 oxidoreductase family. DlgD subfamily. In terms of assembly, homodimer.

The protein localises to the cytoplasm. It carries out the reaction 3-dehydro-L-gulonate + NAD(+) = 2,3-dioxo-L-gulonate + NADH + H(+). The catalysed reaction is 3-dehydro-L-gulonate + NADP(+) = 2,3-dioxo-L-gulonate + NADPH + H(+). In terms of biological role, catalyzes the reduction of 2,3-diketo-L-gulonate in the presence of NADH, to form 3-keto-L-gulonate. In Escherichia fergusonii (strain ATCC 35469 / DSM 13698 / CCUG 18766 / IAM 14443 / JCM 21226 / LMG 7866 / NBRC 102419 / NCTC 12128 / CDC 0568-73), this protein is 2,3-diketo-L-gulonate reductase.